Reading from the N-terminus, the 158-residue chain is 2-C-methyl-D-erythritol 2,4-cyclodiphosphate synthase (158 aa).

Positions 9 and 11 each coordinate a divalent metal cation. 4-CDP-2-C-methyl-D-erythritol 2-phosphate contacts are provided by residues 9–11 (DVH) and 35–36 (HS). His43 contacts a divalent metal cation. 4-CDP-2-C-methyl-D-erythritol 2-phosphate-binding positions include 57 to 59 (DIG), 62 to 66 (FPDTD), 101 to 107 (AQKPKMA), 133 to 136 (TTTE), Phe140, and Arg143.

This sequence belongs to the IspF family. In terms of assembly, homotrimer. Requires a divalent metal cation as cofactor.

The catalysed reaction is 4-CDP-2-C-methyl-D-erythritol 2-phosphate = 2-C-methyl-D-erythritol 2,4-cyclic diphosphate + CMP. Its pathway is isoprenoid biosynthesis; isopentenyl diphosphate biosynthesis via DXP pathway; isopentenyl diphosphate from 1-deoxy-D-xylulose 5-phosphate: step 4/6. In terms of biological role, involved in the biosynthesis of isopentenyl diphosphate (IPP) and dimethylallyl diphosphate (DMAPP), two major building blocks of isoprenoid compounds. Catalyzes the conversion of 4-diphosphocytidyl-2-C-methyl-D-erythritol 2-phosphate (CDP-ME2P) to 2-C-methyl-D-erythritol 2,4-cyclodiphosphate (ME-CPP) with a corresponding release of cytidine 5-monophosphate (CMP). The protein is 2-C-methyl-D-erythritol 2,4-cyclodiphosphate synthase of Bacillus cereus (strain B4264).